The chain runs to 1155 residues: MHC class II transactivator (1155 aa).

The required for acetyltransferase activity stretch occupies residues 171–210; it reads AYANIAELDQYVFQDTQLEGLSKDLFIEHIGAEEGFGENI. Disordered stretches follow at residues 217–237 and 297–357; these read GQKPQKRRFPEEHAMDSKHRK and SLSI…IKLP. The segment covering 224–233 has biased composition (basic and acidic residues); it reads RFPEEHAMDS. One can recognise an NACHT domain in the interval 439–749; the sequence is QVVAVLGKAG…CFLGAVWLAQ (311 aa). 445 to 452 serves as a coordination point for GTP; the sequence is GKAGQGKS. LRR repeat units lie at residues 1010–1033, 1041–1062, 1070–1091, and 1098–1119; these read SLQHLDLDSLSENKIGDKGVSKLS, ALETLNLSQNNITDVGACKLAE, SLLRLSLYNNCICDKGAKSLAQ, and SLRVMDVQFNKFTAAGAQQLAS.

As to quaternary structure, interacts with ZXDA and ZXDC. Interacts with PML (isoform PML-2). Interacts with TAF7; interaction inhibits CIITA acetyltransferase activity, thereby repressing transcription. Post-translationally, autophosphorylated, affecting interaction with TAF7. As to expression, expressed at very high levels in dendritic cells, at very low levels in spleen and thymus and is not detected in other tissues. In terms of tissue distribution, detected at high levels in spleen and tonsil as well as in a number of B-lymphocyte cell lines, and at very low levels in dendritic cells.

It localises to the nucleus. The protein resides in the PML body. It catalyses the reaction L-seryl-[protein] + ATP = O-phospho-L-seryl-[protein] + ADP + H(+). The catalysed reaction is L-threonyl-[protein] + ATP = O-phospho-L-threonyl-[protein] + ADP + H(+). In terms of biological role, essential for transcriptional activity of the HLA class II promoter; activation is via the proximal promoter. Does not bind DNA. May act in a coactivator-like fashion through protein-protein interactions by contacting factors binding to the proximal MHC class II promoter, to elements of the transcription machinery, or both. Alternatively it may activate HLA class II transcription by modifying proteins that bind to the MHC class II promoter. Also mediates enhanced MHC class I transcription, the promoter element requirements for CIITA-mediated transcription are distinct from those of constitutive MHC class I transcription, and CIITA can functionally replace TAF1 at these genes. Activates CD74 transcription. Exhibits intrinsic GTP-stimulated acetyltransferase activity. Exhibits serine/threonine protein kinase activity: phosphorylates the TFIID component TAF7, the RAP74 subunit of the general transcription factor TFIIF, histone H2B at 'Ser-37' and other histones. This chain is MHC class II transactivator, found in Mus musculus (Mouse).